The following is a 181-amino-acid chain: Probable toxin TacT (181 aa).

The protein belongs to the acetyltransferase family. In terms of assembly, forms a complex with cognate antitoxin TacA.

In terms of biological role, probable toxin component of a type II toxin-antitoxin (TA) system. Might acetylate tRNA and inhibit translation. Should be neutralized by cognate antitoxin TacA (y4aR). This is Probable toxin TacT from Sinorhizobium fredii (strain NBRC 101917 / NGR234).